A 103-amino-acid chain; its full sequence is Co-chaperonin GroES (103 aa).

Belongs to the GroES chaperonin family. As to quaternary structure, heptamer of 7 subunits arranged in a ring. Interacts with the chaperonin GroEL.

The protein resides in the cytoplasm. Together with the chaperonin GroEL, plays an essential role in assisting protein folding. The GroEL-GroES system forms a nano-cage that allows encapsulation of the non-native substrate proteins and provides a physical environment optimized to promote and accelerate protein folding. GroES binds to the apical surface of the GroEL ring, thereby capping the opening of the GroEL channel. This is Co-chaperonin GroES from Microcystis aeruginosa (strain NIES-843 / IAM M-2473).